The sequence spans 445 residues: MSNRKYFGTDGIRGRVGDAPITPDFVLKLGWAAGKVLARHGSRKIIIGKDTRISGYMLESALEAGLAAAGLSALFTGPMPTPAVAYLTRTFRAEAGIVISASHNPFYDNGIKFFSIDGTKLPDAVEEAIEAEMEKEISCVYSAELGKASRIVDAAGRYIEFCKATFPNELSLSELKIVVDCANGATYHIAPNVLRELGANVIAIGCEPNGVNINAEVGATDVRALQARVLAEKADLGIAFDGDGDRVIMVDHEGNKVDGDQIMYIIAREGLRQGQLRGGAVGTLMSNMGLELALKQLGIPFARAKVGDRYVLEKMQEKGWRIGAENSGHVILLDKTTTGDGIVAGLQVLAAMARNHMSLHDLCSGMKMFPQILVNVRYTAGSGDPLEHESVKAVSAEVEAALGSRGRVLLRKSGTEPLIRVMVEGEDEAQVTEFAHRIADAVKAV.

The active-site Phosphoserine intermediate is the S102. The Mg(2+) site is built by S102, D241, D243, and D245. S102 carries the post-translational modification Phosphoserine.

It belongs to the phosphohexose mutase family. The cofactor is Mg(2+). Post-translationally, activated by phosphorylation.

The enzyme catalyses alpha-D-glucosamine 1-phosphate = D-glucosamine 6-phosphate. Its function is as follows. Catalyzes the conversion of glucosamine-6-phosphate to glucosamine-1-phosphate. The chain is Phosphoglucosamine mutase from Shigella dysenteriae serotype 1 (strain Sd197).